The sequence spans 429 residues: Glutamyl-tRNA reductase (429 aa).

Substrate is bound by residues 56-59 (TCNR), Ser-119, 124-126 (EPQ), and Gln-130. Cys-57 acts as the Nucleophile in catalysis. Residue 199–204 (GAGEMI) coordinates NADP(+).

This sequence belongs to the glutamyl-tRNA reductase family. In terms of assembly, homodimer.

It carries out the reaction (S)-4-amino-5-oxopentanoate + tRNA(Glu) + NADP(+) = L-glutamyl-tRNA(Glu) + NADPH + H(+). It functions in the pathway porphyrin-containing compound metabolism; protoporphyrin-IX biosynthesis; 5-aminolevulinate from L-glutamyl-tRNA(Glu): step 1/2. In terms of biological role, catalyzes the NADPH-dependent reduction of glutamyl-tRNA(Glu) to glutamate 1-semialdehyde (GSA). The chain is Glutamyl-tRNA reductase from Janthinobacterium sp. (strain Marseille) (Minibacterium massiliensis).